Here is an 858-residue protein sequence, read N- to C-terminus: DNA mismatch repair protein MutS (858 aa).

G611 to S618 contacts ATP.

Belongs to the DNA mismatch repair MutS family.

Its function is as follows. This protein is involved in the repair of mismatches in DNA. It is possible that it carries out the mismatch recognition step. This protein has a weak ATPase activity. This is DNA mismatch repair protein MutS from Actinobacillus succinogenes (strain ATCC 55618 / DSM 22257 / CCUG 43843 / 130Z).